We begin with the raw amino-acid sequence, 138 residues long: Putative pre-16S rRNA nuclease (138 aa).

It belongs to the YqgF nuclease family.

It localises to the cytoplasm. Could be a nuclease involved in processing of the 5'-end of pre-16S rRNA. This Bacillus subtilis (strain 168) protein is Putative pre-16S rRNA nuclease (yrrK).